Reading from the N-terminus, the 355-residue chain is MSAQGKRLMVMAGGTGGHVFPGLAVAHHLMAQGWQVRWLGTADRMEADLVPKHGIEIDFIRISGLRGKGIKALIAAPLRIFNAWRQARAIMKAYKPDVVLGMGGYVSGPGGLAAWSLGIPVVLHEQNGIAGLTNKWLAKIATKVMQAFPGAFPNAEVVGNPVRTDVLALPLPQQRLAGREGPVRVLVVGGSQGARILNQTMPQVAAKLGDSVTIWHQSGKGSQQSVEQAYAEAGQPQHKVTEFIDDMAAAYAWADVVVCRSGALTVSEIAAAGLPALFVPFQHKDRQQYWNALPLEKAGAAKIIEQPQLSVDAVANTLAGWSRETLLTMAERARAASIPDATERVANEVSRAARA.

Residues 15–17 (TGG), asparagine 127, arginine 163, serine 191, isoleucine 244, 263–268 (ALTVSE), and glutamine 288 contribute to the UDP-N-acetyl-alpha-D-glucosamine site.

Belongs to the glycosyltransferase 28 family. MurG subfamily.

Its subcellular location is the cell inner membrane. It catalyses the reaction di-trans,octa-cis-undecaprenyl diphospho-N-acetyl-alpha-D-muramoyl-L-alanyl-D-glutamyl-meso-2,6-diaminopimeloyl-D-alanyl-D-alanine + UDP-N-acetyl-alpha-D-glucosamine = di-trans,octa-cis-undecaprenyl diphospho-[N-acetyl-alpha-D-glucosaminyl-(1-&gt;4)]-N-acetyl-alpha-D-muramoyl-L-alanyl-D-glutamyl-meso-2,6-diaminopimeloyl-D-alanyl-D-alanine + UDP + H(+). It functions in the pathway cell wall biogenesis; peptidoglycan biosynthesis. In terms of biological role, cell wall formation. Catalyzes the transfer of a GlcNAc subunit on undecaprenyl-pyrophosphoryl-MurNAc-pentapeptide (lipid intermediate I) to form undecaprenyl-pyrophosphoryl-MurNAc-(pentapeptide)GlcNAc (lipid intermediate II). The polypeptide is UDP-N-acetylglucosamine--N-acetylmuramyl-(pentapeptide) pyrophosphoryl-undecaprenol N-acetylglucosamine transferase (Escherichia coli O157:H7).